We begin with the raw amino-acid sequence, 297 residues long: DNA processing protein DprA (297 aa).

Belongs to the DprA/Smf family. As to quaternary structure, interacts with RecA. Interacts with ComFA and ComFC.

The protein localises to the cytoplasm. Functionally, protein that helps load RecA onto ssDNA during transformation. Binds cooperatively to circular ssDNA, is able to bridge different segments of DNA. Favors the loading of RecA onto SsbA- or SsbB-coated ssDNA and formation of RecA-DNA filaments. RecA-ATP cannot catalyze homologous DNA strand exchange; SsbA and DprA activate strand exchange by RecA-ATP. The chain is DNA processing protein DprA from Bacillus subtilis (strain 168).